A 197-amino-acid polypeptide reads, in one-letter code: Adenylate kinase 1 (197 aa).

19-24 serves as a coordination point for ATP; it reads GSGKGT. The tract at residues 39–68 is NMP; it reads SSGDLLRAEVQSGSPKGKELKAMMERGELV. Residues Ser40, Arg45, 95–98, and Gln102 each bind AMP; that span reads GYPR. The LID stretch occupies residues 132 to 142; it reads KRAETSNRVDD. Arg133 is a binding site for ATP. AMP contacts are provided by Arg139 and Arg150. Gly178 provides a ligand contact to ATP.

The protein belongs to the adenylate kinase family. AK1 subfamily. As to quaternary structure, monomer. Requires Mg(2+) as cofactor.

It localises to the cytoplasm. The enzyme catalyses AMP + ATP = 2 ADP. It participates in purine metabolism; purine nucleotide biosynthesis. Its function is as follows. Catalyzes the reversible transfer of the terminal phosphate group between ATP and AMP. Plays an important role in cellular energy homeostasis and in adenine nucleotide metabolism. The protein is Adenylate kinase 1 of Schistosoma mansoni (Blood fluke).